A 96-amino-acid polypeptide reads, in one-letter code: Cytochrome c-553 (96 aa).

A signal peptide spans 1-19 (MKKVIMALGVLAFANALMA). 4 residues coordinate heme c: Cys29, Cys32, His33, and Met73.

The protein belongs to the cytochrome c family. In terms of processing, binds 1 heme c group covalently per subunit.

It is found in the periplasm. Functionally, natural electron acceptor for a formate dehydrogenase. This Helicobacter pylori (strain ATCC 700392 / 26695) (Campylobacter pylori) protein is Cytochrome c-553.